A 292-amino-acid chain; its full sequence is Glutamyl-Q tRNA(Asp) synthetase (292 aa).

L-glutamate contacts are provided by residues arginine 11–serine 15 and glutamate 47. The 'HIGH' region signature appears at proline 14–serine 24. Zn(2+)-binding residues include cysteine 103, cysteine 105, tyrosine 116, and cysteine 120. 2 residues coordinate L-glutamate: tyrosine 173 and arginine 191. A 'KMSKS' region motif is present at residues lysine 229 to glutamine 233. Lysine 232 is an ATP binding site.

This sequence belongs to the class-I aminoacyl-tRNA synthetase family. GluQ subfamily. Requires Zn(2+) as cofactor.

In terms of biological role, catalyzes the tRNA-independent activation of glutamate in presence of ATP and the subsequent transfer of glutamate onto a tRNA(Asp). Glutamate is transferred on the 2-amino-5-(4,5-dihydroxy-2-cyclopenten-1-yl) moiety of the queuosine in the wobble position of the QUC anticodon. The chain is Glutamyl-Q tRNA(Asp) synthetase from Acinetobacter baylyi (strain ATCC 33305 / BD413 / ADP1).